Consider the following 197-residue polypeptide: Protein GrpE (197 aa).

Residues 1-27 show a composition bias toward basic and acidic residues; it reads MSNKEQHIEKEEQLQEEKHEEQQKTEE. The disordered stretch occupies residues 1 to 34; sequence MSNKEQHIEKEEQLQEEKHEEQQKTEETEVEAVN.

It belongs to the GrpE family. As to quaternary structure, homodimer.

The protein localises to the cytoplasm. Functionally, participates actively in the response to hyperosmotic and heat shock by preventing the aggregation of stress-denatured proteins, in association with DnaK and GrpE. It is the nucleotide exchange factor for DnaK and may function as a thermosensor. Unfolded proteins bind initially to DnaJ; upon interaction with the DnaJ-bound protein, DnaK hydrolyzes its bound ATP, resulting in the formation of a stable complex. GrpE releases ADP from DnaK; ATP binding to DnaK triggers the release of the substrate protein, thus completing the reaction cycle. Several rounds of ATP-dependent interactions between DnaJ, DnaK and GrpE are required for fully efficient folding. In Pasteurella multocida (strain Pm70), this protein is Protein GrpE.